A 197-amino-acid polypeptide reads, in one-letter code: Elongation factor Ts (197 aa).

Positions 81-84 are involved in Mg(2+) ion dislocation from EF-Tu; the sequence is TDFV.

This sequence belongs to the EF-Ts family.

It localises to the cytoplasm. Functionally, associates with the EF-Tu.GDP complex and induces the exchange of GDP to GTP. It remains bound to the aminoacyl-tRNA.EF-Tu.GTP complex up to the GTP hydrolysis stage on the ribosome. The chain is Elongation factor Ts from Sulfurihydrogenibium sp. (strain YO3AOP1).